Reading from the N-terminus, the 299-residue chain is Ribosomal protein L11 methyltransferase (299 aa).

S-adenosyl-L-methionine contacts are provided by T139, G163, D185, and N232.

It belongs to the methyltransferase superfamily. PrmA family.

It localises to the cytoplasm. The catalysed reaction is L-lysyl-[protein] + 3 S-adenosyl-L-methionine = N(6),N(6),N(6)-trimethyl-L-lysyl-[protein] + 3 S-adenosyl-L-homocysteine + 3 H(+). Functionally, methylates ribosomal protein L11. The chain is Ribosomal protein L11 methyltransferase from Crocosphaera subtropica (strain ATCC 51142 / BH68) (Cyanothece sp. (strain ATCC 51142)).